Here is a 249-residue protein sequence, read N- to C-terminus: Gamma-glutamyl peptidase 3 (249 aa).

The region spanning 19–217 (SEFVKKTYGG…VDRVLNMKLM (199 aa)) is the Glutamine amidotransferase type-1 domain. C103 (nucleophile) is an active-site residue. Catalysis depends on residues H196 and E198.

The protein belongs to the peptidase C26 family.

Its subcellular location is the cytoplasm. The protein resides in the cytosol. It carries out the reaction an S-[(1E)-1-(hydroxyimino)-omega-(methylsulfanyl)alkyl]-L-glutathione + H2O = an S-[(1E)-1-(hydroxyimino)-omega-(methylsulfanyl)alkyl]-L-cysteinylglycine + L-glutamate. The enzyme catalyses (E)-1-(glutathione-S-yl)-2-(1H-indol-3-yl)acetohydroximate + H2O = (E)-1-(glycyl-L-cystein-S-yl)-2-(1H-indol-3-yl)acetohydroximate + L-glutamate. It catalyses the reaction 2-(glutathion-S-yl)-2-(1H-indol-3-yl)acetonitrile + H2O = 2-(glycyl-L-cystein-S-yl)-2-(1H-indol-3-yl)acetonitrile + L-glutamate. The catalysed reaction is (Z)-1-(glutathione-S-yl)-2-phenylacetohydroximate + H2O = (Z)-1-(glycyl-L-cystein-S-yl)-2-phenylacetohydroximate + L-glutamate. The protein operates within secondary metabolite biosynthesis. Its function is as follows. Involved in glucosinolate biosynthesis. Hydrolyzes the gamma-glutamyl peptide bond of several glutathione (GSH) conjugates to produce Cys-Gly conjugates related to glucosinolates. The gamma-Glu-Cys-Gly-GSH conjugates are the sulfur-donating molecule in glucosinolate biosynthesis. Can use the GSH conjugate of the camalexin intermediate IAN (GS-IAN) as substrate. Required for the biosynthesis of camalexin, a pathogen-inducible phytoalexin with antibacterial and antifungal properties. The chain is Gamma-glutamyl peptidase 3 from Arabidopsis thaliana (Mouse-ear cress).